The chain runs to 464 residues: Citrate synthase, mitochondrial (464 aa).

The transit peptide at 1–27 (MALLTAAARLFGAKNASCLVLAARHAS) directs the protein to the mitochondrion. Residues 2 to 21 (ALLTAAARLFGAKNASCLVL) carry the SIFI-degron motif. N6-acetyllysine; alternate is present on lysine 76. At lysine 76 the chain carries N6-succinyllysine; alternate. Residues lysine 103 and lysine 193 each carry the N6-succinyllysine modification. Serine 226 carries the phosphoserine modification. Histidine 301 is an active-site residue. Lysine 321 and lysine 327 each carry N6-acetyllysine; alternate. Residues lysine 321 and lysine 327 each carry the N6-succinyllysine; alternate modification. Histidine 347 is an active-site residue. Arginine 356 lines the oxaloacetate pocket. Lysine 375 bears the N6-acetyllysine; alternate mark. N6-succinyllysine; alternate is present on lysine 375. Lysine 382 bears the N6-acetyllysine mark. Lysine 393 bears the N6-acetyllysine; alternate mark. Position 393 is an N6-succinyllysine; alternate (lysine 393). Lysine 395 bears the N6,N6,N6-trimethyllysine mark. The active site involves aspartate 402. Residues arginine 428 and arginine 448 each contribute to the oxaloacetate site. At lysine 450 the chain carries N6-succinyllysine. Position 459 is an N6-acetyllysine; alternate (lysine 459). Lysine 459 carries the post-translational modification N6-succinyllysine; alternate.

The protein belongs to the citrate synthase family. In terms of assembly, homodimer. Methylated. Trimethylation at Lys-395 by CSKMT decreases citrate synthase activity. Post-translationally, in response to mitochondrial stress, the precursor protein is ubiquitinated by the SIFI complex in the cytoplasm before mitochondrial import, leading to its degradation. Within the SIFI complex, UBR4 initiates ubiquitin chain that are further elongated or branched by KCMF1.

The protein localises to the mitochondrion matrix. It carries out the reaction oxaloacetate + acetyl-CoA + H2O = citrate + CoA + H(+). It participates in carbohydrate metabolism; tricarboxylic acid cycle; isocitrate from oxaloacetate: step 1/2. Functionally, key enzyme of the Krebs tricarboxylic acid cycle which catalyzes the synthesis of citrate from acetyl coenzyme A and oxaloacetate. The protein is Citrate synthase, mitochondrial (CS) of Sus scrofa (Pig).